A 201-amino-acid chain; its full sequence is MRTVGIGAGVRRLGRAVVMAAAVGGLVLGSAGASNAAGVMTGAKFTQIQFGMTRQQVLDIAGAENCETGGSFGDSIHCRGHAAGDYYAYATFGFTSAAADAKVDSKSQEKLLAPSAPTLTLAKFNQVTVGMTRAQVLATVGQGSCTTWSEYYPAYPSTAGVTLSLSCFDVDGYSSTGFYRGSAHLWFTDGVLQGKRQWDLV.

Positions 1-36 (MRTVGIGAGVRRLGRAVVMAAAVGGLVLGSAGASNA) are cleaved as a signal peptide. 2 repeat units span residues 37–112 (AGVM…EKLL) and 116–201 (APTL…WDLV). Cystine bridges form between Cys66–Cys78 and Cys145–Cys167.

As to quaternary structure, interacts with E.coli beta-lactamase TEM-1; interaction inhibits hydrolysis of beta-lactam antibiotics. Interacts with K.pneumoniae beta-lactamase SHV-1. Interacts with K.pneumoniae beta-lactamases KPC-2 and KPC-3; interaction inhibits hydrolysis of beta-lactam antibiotics. Interacts with E.coli beta-lactamases CTX-M-14 and CTX-M-15; interaction inhibits hydrolysis of beta-lactam antibiotics.

It localises to the secreted. Its function is as follows. Inhibits a wide variety of beta lactamases. The protein is Beta-lactamase inhibitory protein of Streptomyces clavuligerus.